A 147-amino-acid chain; its full sequence is Small ribosomal subunit protein uS9 (147 aa).

Positions 128–147 (KERKKYGQMGARAKYRWSKR) are disordered.

This sequence belongs to the universal ribosomal protein uS9 family.

The chain is Small ribosomal subunit protein uS9 (rpsI) from Aquifex aeolicus (strain VF5).